The following is a 273-amino-acid chain: MRIKPYFESDDKNFNIYQGNCIDFMSHFQDNSIDMIFADPPYFLSNDGLTFKNSIIQSVNKGEWDKNDNEASIYNFNHEWIAQARQLLKDNGTIWISGTHHNIFTVGQVLKENNFKILNIITWEKPNPPPNFSCRYFTYSSEWIIWARKHSKIPHYFNYDLMKKLNGDKQQKDIWRLPAVGSWEKTQGKHPTQKPLGLLSRIILSSTQKDDLILDPFSGSGTTGIAGVLLDRNYIGIEQELEFLELSKRRYHEITPVLKNEFKQKIRKQISAI.

It belongs to the N(4)/N(6)-methyltransferase family.

It carries out the reaction a 2'-deoxyadenosine in DNA + S-adenosyl-L-methionine = an N(6)-methyl-2'-deoxyadenosine in DNA + S-adenosyl-L-homocysteine + H(+). Its function is as follows. A beta subtype methylase that recognizes the double-stranded sequence 5'-GATC-3', methylates A-2 on both strands, and protects the DNA from cleavage by the MboI endonuclease. This seems to be a weaker methylase than M1.MboI. This is Type II methyltransferase M2.MboI (mboIBM) from Moraxella bovis.